The chain runs to 689 residues: Translation initiation factor IF-2 (689 aa).

The tract at residues 70-107 (VRSKKNSNKKKKKGKGNQDKRQENFAGKQQAQTVETPD) is disordered. Positions 71-84 (RSKKNSNKKKKKGK) are enriched in basic residues. A tr-type G domain is found at 191–360 (ERPAVVTIMG…LLVSEVEEYK (170 aa)). Positions 200–207 (GHVDHGKT) are G1. Residue 200 to 207 (GHVDHGKT) participates in GTP binding. Positions 225 to 229 (GITQH) are G2. The tract at residues 246-249 (DTPG) is G3. Residues 246-250 (DTPGH) and 300-303 (NKMD) each bind GTP. The segment at 300 to 303 (NKMD) is G4. The G5 stretch occupies residues 336–338 (SAI).

The protein belongs to the TRAFAC class translation factor GTPase superfamily. Classic translation factor GTPase family. IF-2 subfamily.

It localises to the cytoplasm. In terms of biological role, one of the essential components for the initiation of protein synthesis. Protects formylmethionyl-tRNA from spontaneous hydrolysis and promotes its binding to the 30S ribosomal subunits. Also involved in the hydrolysis of GTP during the formation of the 70S ribosomal complex. In Bacillus cytotoxicus (strain DSM 22905 / CIP 110041 / 391-98 / NVH 391-98), this protein is Translation initiation factor IF-2.